The sequence spans 369 residues: Nuclear pore complex-interacting protein family member A2 (369 aa).

Residues K325–N346 form a disordered region.

It belongs to the NPIP family.

The polypeptide is Nuclear pore complex-interacting protein family member A2 (NPIPA2) (Homo sapiens (Human)).